The chain runs to 481 residues: 2-succinylbenzoate--CoA ligase (481 aa).

Belongs to the ATP-dependent AMP-binding enzyme family. MenE subfamily.

It catalyses the reaction 2-succinylbenzoate + ATP + CoA = 2-succinylbenzoyl-CoA + AMP + diphosphate. Its pathway is quinol/quinone metabolism; 1,4-dihydroxy-2-naphthoate biosynthesis; 1,4-dihydroxy-2-naphthoate from chorismate: step 5/7. It functions in the pathway quinol/quinone metabolism; menaquinone biosynthesis. Converts 2-succinylbenzoate (OSB) to 2-succinylbenzoyl-CoA (OSB-CoA). This Bacillus cytotoxicus (strain DSM 22905 / CIP 110041 / 391-98 / NVH 391-98) protein is 2-succinylbenzoate--CoA ligase.